The sequence spans 104 residues: Large ribosomal subunit protein uL24 (104 aa).

Belongs to the universal ribosomal protein uL24 family. Part of the 50S ribosomal subunit.

Functionally, one of two assembly initiator proteins, it binds directly to the 5'-end of the 23S rRNA, where it nucleates assembly of the 50S subunit. Its function is as follows. One of the proteins that surrounds the polypeptide exit tunnel on the outside of the subunit. The sequence is that of Large ribosomal subunit protein uL24 from Herminiimonas arsenicoxydans.